A 457-amino-acid polypeptide reads, in one-letter code: Acetylcholine receptor subunit alpha (457 aa).

The N-terminal stretch at 1-20 is a signal peptide; the sequence is MEPWPLLLLFSLCSAGLVLG. Residues 21 to 232 are Extracellular-facing; sequence SEHETRLVAK…YHFVMQRLPL (212 aa). Intrachain disulfides connect C148–C162 and C212–C213. Residue N161 is glycosylated (N-linked (GlcNAc...) asparagine). The chain crosses the membrane as a helical span at residues 233-253; it reads YFIVNVIIPCLLFSFLTGLVF. Residues 254 to 264 are Cytoplasmic-facing; the sequence is YLPTDSGEKMT. Residues 265–285 traverse the membrane as a helical segment; it reads LSISVLLSLTVFLLVIVELIP. Residues 286–296 lie on the Extracellular side of the membrane; sequence STSSAVPLIGK. A helical transmembrane segment spans residues 297–317; the sequence is YMLFTMVFVIASIIITVIVIN. The Cytoplasmic segment spans residues 318-427; that stretch reads THHRSPSTHV…EWKYVAMVMD (110 aa). A helical transmembrane segment spans residues 428–448; that stretch reads HILLGVFMLVCIIGTLAVFAG. Residues 449-457 are Extracellular-facing; sequence RLIELNQQG.

It belongs to the ligand-gated ion channel (TC 1.A.9) family. Acetylcholine receptor (TC 1.A.9.1) subfamily. Alpha-1/CHRNA1 sub-subfamily. One of the alpha chains that assemble within the acetylcholine receptor, a pentamer of two alpha chains, a beta, a delta, and a gamma (in immature muscle) or epsilon (in mature muscle) chains. The muscle heteropentamer composed of alpha-1, beta-1, delta, epsilon subunits interacts with the alpha-conotoxin ImII. In terms of assembly, is able to interact with other subunits of the acetylcholine receptor but is not assembled into functional acetylcholine-gated cation-selective channels. As to expression, isoform 1 is only expressed in skeletal muscle. Isoform 2 is constitutively expressed in skeletal muscle, brain, heart, kidney, liver, lung and thymus.

The protein localises to the postsynaptic cell membrane. Its subcellular location is the cell membrane. The catalysed reaction is K(+)(in) = K(+)(out). It carries out the reaction Na(+)(in) = Na(+)(out). Functionally, upon acetylcholine binding, the AChR responds by an extensive change in conformation that affects all subunits and leads to opening of an ion-conducting channel across the plasma membrane. Non functional acetylcholine receptor alpha subunit which is not integrated into functional acetylcholine-gated cation-selective channels. This Homo sapiens (Human) protein is Acetylcholine receptor subunit alpha.